An 879-amino-acid chain; its full sequence is MTDLAPKYNPNEVEKGRYQEWLDEDLFKPSGDKKAHPYSIVIPPPNVTGKLHLGHAWDTAIQDTLIRFKRMEGYDTLYLPGMDHAGIATQAKVEAKLRKQGKDRHEMGREAFVKQVWDWKDEYANIIKSQWSKLGLSLDYSRERFTLDKGLSKAVKKVFVQLYNEGLIYRGEYIINWDPTLETALSDIEVIHKDDKGAFYHVKYPFADGSGFVEIATTRPETMFGDTAVAVAPGDPRYKDIVGKELILPLVGRHIPIIEDQHVDPEFGTGLVKITPAHDPNDFQVGNRHNLKRINVMNDDGTMNEEAGKYAGMDRFECREALVKDLKEEGYLIKVEPIVHSVGHSERSGVQVEPRLSKQWFVKMKPLADKVLENQKSEGKVNFVPERFEQTLNHWMENVHDWVISRQLWWGHRIPAWYNKKTGETYVGEEAPKDIENWEQDPDVLDTWFSSALWPFSTMGWPDTDNPDFKRYFPTNALVTGYDIIFFWVSRMIFQSLHFTKERPFKDVVLHGLIRDEQGRKMSKSLGNGIDPMDVIDKYGADALRWFLLNGTAPGQDTRFSYTKMDAAWNFINKIWNVSRFVIMNLPEDAKPAHMPDTSKFDLSDKWIFDRLNHTIGEVTRLFGEYQFGEAGREAYNFIWNDFCDWYIEISKVALNGDDEELKARKQENLIWILDQILRLMHPIMPFVTEKLWLSMPHEGKSIMTASYPVTHKEFENKTADQEMDFLIEVIKAVRNIRMEVNAPMSSEIDIMIKLDDLNNKHILDENVDYVENFLHPKKLEVSADIEAPKLAKTAVIPGAQIFVPLTELVNVDEELAKMEKEAKRLEDEVARCEKKLSNKGFVDHAPEAVVNKEKEKMADYESQLSGVRERIQDLKESK.

The 'HIGH' region motif lies at 45-55 (PNVTGKLHLGH). The 'KMSKS' region motif lies at 521-525 (KMSKS). Lys524 contributes to the ATP binding site. Positions 806–879 (LTELVNVDEE…ERIQDLKESK (74 aa)) form a coiled coil.

This sequence belongs to the class-I aminoacyl-tRNA synthetase family. ValS type 1 subfamily. In terms of assembly, monomer.

It is found in the cytoplasm. It catalyses the reaction tRNA(Val) + L-valine + ATP = L-valyl-tRNA(Val) + AMP + diphosphate. Functionally, catalyzes the attachment of valine to tRNA(Val). As ValRS can inadvertently accommodate and process structurally similar amino acids such as threonine, to avoid such errors, it has a 'posttransfer' editing activity that hydrolyzes mischarged Thr-tRNA(Val) in a tRNA-dependent manner. This is Valine--tRNA ligase from Lactobacillus acidophilus (strain ATCC 700396 / NCK56 / N2 / NCFM).